Here is a 216-residue protein sequence, read N- to C-terminus: Small ribosomal subunit protein uS3c (216 aa).

Positions isoleucine 43–threonine 118 constitute a KH type-2 domain.

This sequence belongs to the universal ribosomal protein uS3 family. In terms of assembly, part of the 30S ribosomal subunit.

Its subcellular location is the plastid. It is found in the chloroplast. The chain is Small ribosomal subunit protein uS3c (rps3) from Phaseolus vulgaris (Kidney bean).